The sequence spans 579 residues: Potassium-transporting ATPase potassium-binding subunit (579 aa).

10 helical membrane-spanning segments follow: residues methionine 1–valine 21, histidine 64–glutamine 84, glycine 135–isoleucine 155, isoleucine 178–valine 198, phenylalanine 265–methionine 285, tryptophan 293–alanine 313, glycine 398–glycine 418, methionine 435–valine 455, tryptophan 503–alanine 523, and leucine 549–glycine 569.

It belongs to the KdpA family. The system is composed of three essential subunits: KdpA, KdpB and KdpC.

The protein resides in the cell membrane. Its function is as follows. Part of the high-affinity ATP-driven potassium transport (or Kdp) system, which catalyzes the hydrolysis of ATP coupled with the electrogenic transport of potassium into the cytoplasm. This subunit binds the extracellular potassium ions and delivers the ions to the membrane domain of KdpB through an intramembrane tunnel. The protein is Potassium-transporting ATPase potassium-binding subunit of Herpetosiphon aurantiacus (strain ATCC 23779 / DSM 785 / 114-95).